The primary structure comprises 328 residues: tRNA dimethylallyltransferase (328 aa).

10-17 (GPTASGKT) contributes to the ATP binding site. A substrate-binding site is contributed by 12–17 (TASGKT).

Belongs to the IPP transferase family. As to quaternary structure, monomer. Mg(2+) is required as a cofactor.

It carries out the reaction adenosine(37) in tRNA + dimethylallyl diphosphate = N(6)-dimethylallyladenosine(37) in tRNA + diphosphate. Catalyzes the transfer of a dimethylallyl group onto the adenine at position 37 in tRNAs that read codons beginning with uridine, leading to the formation of N6-(dimethylallyl)adenosine (i(6)A). The sequence is that of tRNA dimethylallyltransferase from Bifidobacterium longum (strain NCC 2705).